Here is a 504-residue protein sequence, read N- to C-terminus: Cobyric acid synthase (504 aa).

The GATase cobBQ-type domain occupies 258–454 (EIEIAIIKLP…LHGIFENDEW (197 aa)). Cysteine 339 functions as the Nucleophile in the catalytic mechanism. The active site involves histidine 446.

This sequence belongs to the CobB/CobQ family. CobQ subfamily.

Its pathway is cofactor biosynthesis; adenosylcobalamin biosynthesis. In terms of biological role, catalyzes amidations at positions B, D, E, and G on adenosylcobyrinic A,C-diamide. NH(2) groups are provided by glutamine, and one molecule of ATP is hydrogenolyzed for each amidation. The chain is Cobyric acid synthase from Prochlorococcus marinus (strain NATL2A).